An 874-amino-acid chain; its full sequence is Trimodular acetylaranotin synthesis protein ataIMG (874 aa).

An aminotransferase ataI region spans residues 1 to 339 (MANLSGLSNR…DSGLLRASSI (339 aa)). Positions 20–39 (RFGFQTTQQAKPTESSKTPI) are disordered. Polar residues predominate over residues 23–37 (FQTTQQAKPTESSKT). The tract at residues 340–668 (SYNSMVKGSS…QERTEAEWRT (329 aa)) is O-methyltransferase ataM. Aspartate 625 provides a ligand contact to S-adenosyl-L-methionine. Residues 669–874 (LAGRTGWEIR…VMEMGPQIGH (206 aa)) are glutathione S-transferase ataG. The 68-residue stretch at 699-766 (KPLILAHELE…YLADRFDDGT (68 aa)) folds into the GST N-terminal domain. In terms of domain architecture, GST C-terminal spans 739-874 (DPETKAEVIV…VMEMGPQIGH (136 aa)).

It in the N-terminal section; belongs to the class-I pyridoxal-phosphate-dependent aminotransferase family. This sequence in the 2nd section; belongs to the class I-like SAM-binding methyltransferase superfamily. Cation-independent O-methyltransferase family. In the C-terminal section; belongs to the GST superfamily. Requires pyridoxal 5'-phosphate as cofactor.

The enzyme catalyses RX + glutathione = an S-substituted glutathione + a halide anion + H(+). It participates in mycotoxin biosynthesis. Its function is as follows. Trimodular acetylaranotin synthesis protein; part of the gene cluster that mediates the biosynthesis of acetylaranotin, a member of the epipolythiodioxopiperazine (ETP) class of toxins characterized by a disulfide-bridged cyclic dipeptide. The first step of acetylaranotin biosynthesis is performed by the NRPS ataP which produces diketopiperazine cyclo-L-Phe-L-Phe via the condensation of 2 phenylalanines (L-Phe). The ataC domain of ataTC then catalyzes the formation of bishydroxylation of cyclo-L-Phe-L-Phe. The glutathione S-transferase domain ataG in ataIMG further catalyzes the conjugation of two glutathiones to the bishydroxylated intermediate. Next, the dipeptidase ataJ removes the Glu residues. The following step is performed by the carbon sulfur lyase domain ataI of ataIMG which may convert the bis-cysteinyl adduct to yield an epidithiol intermediate. The ataT domain from ataTC then catalyzes the oxidation of the free dithiols, followed by a cyclization step catalyzed by the cytochrome P450 ataF. AtaF probably acts as an epoxidase to promote a dual epoxidation formation at C8 and C9 along with C8' and C9', followed by the spontaneous nucleophilic attack of the amide nitrogens N10 and N10' to yield an intermediate with the pyrrolidine partial structure. The final steps of acetylaranotin biosynthesis involve the acetylation and ring rearrangement of an epitetrathiodiketopiperazine intermediate to produce acetylaranotin. AtaH probably catalyzes the acetylation of epitetrathiodiketopiperazine to produce a diacetate and ataY is responsible for the formation of the dihydrooxepin moiety that converts the diacetate intermediate to acetylaranotin via acetylapoaranotin. Both enzymes could function independently in the absence of the other. The acetylaranotin bis-thiomethyltransferase ataS located outside of acetylaranotin gene cluster is the main thiomethyltransferase responsible for converting acetylaranotin and its related intermediates to their methylated forms. The polypeptide is Trimodular acetylaranotin synthesis protein ataIMG (Aspergillus terreus (strain NIH 2624 / FGSC A1156)).